The sequence spans 414 residues: Isocitrate dehydrogenase [NADP] cytoplasmic (414 aa).

At serine 2 the chain carries N-acetylserine. Tyrosine 42 carries the phosphotyrosine modification. Threonine 75–threonine 77 contacts NADP(+). Threonine 77 is a substrate binding site. Position 81 is an N6-acetyllysine (lysine 81). Arginine 82 lines the NADP(+) pocket. Substrate-binding positions include serine 94–arginine 100 and arginine 109. An N6-succinyllysine modification is found at lysine 126. 2 residues coordinate substrate: arginine 132 and lysine 212. N6-acetyllysine occurs at positions 224, 233, and 243. A Mn(2+)-binding site is contributed by aspartate 252. Lysine 260 contributes to the NADP(+) binding site. Residues aspartate 275 and aspartate 279 each contribute to the Mn(2+) site. Glycine 310–histidine 315 is a binding site for NADP(+). Residue lysine 321 is modified to N6-acetyllysine. Residue asparagine 328 coordinates NADP(+). The residue at position 389 (serine 389) is a Phosphoserine. N6-succinyllysine is present on lysine 400.

The protein belongs to the isocitrate and isopropylmalate dehydrogenases family. In terms of assembly, homodimer. It depends on Mg(2+) as a cofactor. Requires Mn(2+) as cofactor. Post-translationally, the N-terminus is blocked. In terms of processing, acetylation at Lys-374 dramatically reduces catalytic activity. Ubiquitous.

It is found in the cytoplasm. The protein localises to the cytosol. Its subcellular location is the peroxisome. It catalyses the reaction D-threo-isocitrate + NADP(+) = 2-oxoglutarate + CO2 + NADPH. Catalyzes the NADP(+)-dependent oxidative decarboxylation of isocitrate (D-threo-isocitrate) to 2-ketoglutarate (2-oxoglutarate), which is required by other enzymes such as the phytanoyl-CoA dioxygenase. Plays a critical role in the generation of NADPH, an important cofactor in many biosynthesis pathways. May act as a corneal epithelial crystallin and may be involved in maintaining corneal epithelial transparency. This chain is Isocitrate dehydrogenase [NADP] cytoplasmic (Idh1), found in Rattus norvegicus (Rat).